The sequence spans 125 residues: Histone H2A (125 aa).

The segment covering 1-18 (MSGRGKGGKARAKAKSRS) has biased composition (basic residues). Residues 1–21 (MSGRGKGGKARAKAKSRSSRA) are disordered. The residue at position 2 (Ser2) is an N-acetylserine. Ser2 carries the phosphoserine modification. N5-methylglutamine is present on Gln104.

The protein belongs to the histone H2A family. As to quaternary structure, the nucleosome is a histone octamer containing two molecules each of H2A, H2B, H3 and H4 assembled in one H3-H4 heterotetramer and two H2A-H2B heterodimers. The octamer wraps approximately 147 bp of DNA.

The protein localises to the nucleus. Its subcellular location is the chromosome. Its function is as follows. Core component of nucleosome. Nucleosomes wrap and compact DNA into chromatin, limiting DNA accessibility to the cellular machineries which require DNA as a template. Histones thereby play a central role in transcription regulation, DNA repair, DNA replication and chromosomal stability. DNA accessibility is regulated via a complex set of post-translational modifications of histones, also called histone code, and nucleosome remodeling. The polypeptide is Histone H2A (Asterias rubens (Common European starfish)).